The primary structure comprises 427 residues: Polyprenol-phosphate-mannose-dependent alpha-(1-2)-phosphatidylinositol mannoside mannosyltransferase (427 aa).

10 helical membrane-spanning segments follow: residues 18–38 (LWCL…WRLF), 101–121 (ASVA…AIVL), 143–163 (WLAV…SSNF), 191–211 (LMLG…LYFL), 218–238 (AALT…VLAW), 279–299 (ERFA…IWAM), 308–328 (PTLA…VSWS), 331–346 (WVWM…LLGW), 351–371 (VALA…PIDL), and 386–406 (LAGM…GLTV).

Belongs to the glycosyltransferase 87 family.

The protein resides in the cell membrane. The protein operates within phospholipid metabolism; phosphatidylinositol metabolism. Responsible for the addition of alpha-(1-2) mannose branches to the linear mannan core on the biosynthetic pathway to mature lipoarabinomannan (LAM). This chain is Polyprenol-phosphate-mannose-dependent alpha-(1-2)-phosphatidylinositol mannoside mannosyltransferase, found in Mycobacterium tuberculosis (strain ATCC 25618 / H37Rv).